The following is a 652-amino-acid chain: Acetyl-coenzyme A synthetase (652 aa).

CoA-binding positions include 191-194 (RAGR), threonine 311, and asparagine 335. Residues 387–389 (GEP), 411–416 (DTWWQT), aspartate 500, and arginine 515 contribute to the ATP site. Serine 523 contributes to the CoA binding site. Arginine 526 is a binding site for ATP. Mg(2+)-binding residues include valine 537, histidine 539, and isoleucine 542. Arginine 584 serves as a coordination point for CoA. The residue at position 609 (lysine 609) is an N6-acetyllysine; by autocatalysis.

This sequence belongs to the ATP-dependent AMP-binding enzyme family. As to quaternary structure, forms a 1:1 complex with CobB/NAD-dependent deacetylase. The cofactor is Mg(2+). In terms of processing, autoacetylated. Deacetylation by CobB activates the enzyme.

It carries out the reaction acetate + ATP + CoA = acetyl-CoA + AMP + diphosphate. Functionally, catalyzes the conversion of acetate into acetyl-CoA (AcCoA), an essential intermediate at the junction of anabolic and catabolic pathways. Acs undergoes a two-step reaction. In the first half reaction, Acs combines acetate with ATP to form acetyl-adenylate (AcAMP) intermediate. In the second half reaction, it can then transfer the acetyl group from AcAMP to the sulfhydryl group of CoA, forming the product AcCoA. Its function is as follows. Enables the cell to use acetate during aerobic growth to generate energy via the TCA cycle, and biosynthetic compounds via the glyoxylate shunt. Acetylates CheY, the response regulator involved in flagellar movement and chemotaxis. This is Acetyl-coenzyme A synthetase from Escherichia coli (strain K12).